The primary structure comprises 713 residues: Mitochondrial intermediate peptidase (713 aa).

Residues 1–35 constitute a mitochondrion transit peptide; that stretch reads MLCVGRLGGLGARAAALPPRRAGRGILEAGIRARR. Lysine 126 is subject to N6-acetyllysine. Histidine 495 lines the Zn(2+) pocket. The active site involves glutamate 496. The Zn(2+) site is built by histidine 499 and histidine 502.

The protein belongs to the peptidase M3 family. As to quaternary structure, monomer. Requires Zn(2+) as cofactor.

It localises to the mitochondrion matrix. The enzyme catalyses Release of an N-terminal octapeptide as second stage of processing of some proteins imported into the mitochondrion.. Its activity is regulated as follows. Activity is divalent cation-dependent. It is stimulated by manganese, magnesium or calcium ions and reversibly inhibited by zinc, cobalt and iron. Functionally, cleaves proteins, imported into the mitochondrion, to their mature size. This is Mitochondrial intermediate peptidase (MIPEP) from Pongo abelii (Sumatran orangutan).